Here is a 122-residue protein sequence, read N- to C-terminus: MARLAGVDLPRNKRMEVALTYIYGIGPARAKELLEKTGISPDLRTDNLDDDQLSALRDVIEATWKVEGDLRRQVQADIRRKIEIGCYQGIRHRRGLPVRGQRTKTNARTRKGPKKTIAGKKK.

The interval 95–122 (GLPVRGQRTKTNARTRKGPKKTIAGKKK) is disordered.

It belongs to the universal ribosomal protein uS13 family. In terms of assembly, part of the 30S ribosomal subunit. Forms a loose heterodimer with protein S19. Forms two bridges to the 50S subunit in the 70S ribosome.

In terms of biological role, located at the top of the head of the 30S subunit, it contacts several helices of the 16S rRNA. In the 70S ribosome it contacts the 23S rRNA (bridge B1a) and protein L5 of the 50S subunit (bridge B1b), connecting the 2 subunits; these bridges are implicated in subunit movement. Contacts the tRNAs in the A and P-sites. This chain is Small ribosomal subunit protein uS13, found in Corynebacterium aurimucosum (strain ATCC 700975 / DSM 44827 / CIP 107346 / CN-1) (Corynebacterium nigricans).